A 104-amino-acid chain; its full sequence is Phosphoribosyl-ATP pyrophosphatase (104 aa).

Belongs to the PRA-PH family.

It localises to the cytoplasm. The enzyme catalyses 1-(5-phospho-beta-D-ribosyl)-ATP + H2O = 1-(5-phospho-beta-D-ribosyl)-5'-AMP + diphosphate + H(+). The protein operates within amino-acid biosynthesis; L-histidine biosynthesis; L-histidine from 5-phospho-alpha-D-ribose 1-diphosphate: step 2/9. This is Phosphoribosyl-ATP pyrophosphatase from Allorhizobium ampelinum (strain ATCC BAA-846 / DSM 112012 / S4) (Agrobacterium vitis (strain S4)).